Consider the following 451-residue polypeptide: Trigger factor (451 aa).

A PPIase FKBP-type domain is found at 173–258 (GDRVTLDFVG…LKKIEWAHLP (86 aa)).

Belongs to the FKBP-type PPIase family. Tig subfamily.

It is found in the cytoplasm. It catalyses the reaction [protein]-peptidylproline (omega=180) = [protein]-peptidylproline (omega=0). In terms of biological role, involved in protein export. Acts as a chaperone by maintaining the newly synthesized protein in an open conformation. Functions as a peptidyl-prolyl cis-trans isomerase. The chain is Trigger factor from Cupriavidus pinatubonensis (strain JMP 134 / LMG 1197) (Cupriavidus necator (strain JMP 134)).